A 344-amino-acid polypeptide reads, in one-letter code: Melanocyte-stimulating hormone receptor (344 aa).

Over 1–37 (MPMQGAQRKLLGSLNSTPTATSNLGLAANHTGAPCLE) the chain is Extracellular. N29 carries N-linked (GlcNAc...) asparagine glycosylation. The helical transmembrane segment at 38 to 63 (VPIPDGLFLSLGLVSLVENVLVVAAI) threads the bilayer. The Cytoplasmic segment spans residues 64 to 72 (AKNRNLHSS). A helical membrane pass occupies residues 73–93 (MYCFICCLAVSDLLVSGSNML). Residues 94–118 (ETAIILLLEAGALVTRASVVQQLHN) are Extracellular-facing. The chain crosses the membrane as a helical span at residues 119 to 140 (TIDVLTCSSMLCSLCFLGAIAV). At 141 to 163 (DRYISIFYALRYHSIMTLPRAQR) the chain is on the cytoplasmic side. Residues 164-183 (AIAAIWVASVLSSTLFITYY) form a helical membrane-spanning segment. At 184–191 (DHAAVLLC) the chain is on the extracellular side. The helical transmembrane segment at 192 to 211 (LVVFFLAMLVLMAVLYVHML) threads the bilayer. Residues 212–240 (ARACQHAQGIIRLHKRQPPAHKGFGLRGA) are Cytoplasmic-facing. A helical transmembrane segment spans residues 241–266 (ATLTILLGIFFLCWGPFFLHLTLVVF). Topologically, residues 267–279 (CPQHMTCSCIFKN) are extracellular. The chain crosses the membrane as a helical span at residues 280–300 (FKVFLTLIICNTIIDPLIYAF). The Cytoplasmic portion of the chain corresponds to 301–344 (RSQELRRTLKEVLLCSRWPGCWAEGGGDSVWPGSCVTLRGPLPP). C315 carries the S-palmitoyl cysteine lipid modification.

This sequence belongs to the G-protein coupled receptor 1 family. Interacts with MGRN1, but does not undergo MGRN1-mediated ubiquitination; this interaction competes with GNAS-binding and thus inhibits agonist-induced cAMP production. Interacts with OPN3; the interaction results in a decrease in MC1R-mediated cAMP signaling and ultimately a decrease in melanin production in melanocytes.

The protein resides in the cell membrane. Receptor for MSH (alpha, beta and gamma) and ACTH. The activity of this receptor is mediated by G proteins which activate adenylate cyclase. Mediates melanogenesis, the production of eumelanin (black/brown) and phaeomelanin (red/yellow), via regulation of cAMP signaling in melanocytes. The chain is Melanocyte-stimulating hormone receptor (MC1R) from Callimico goeldii (Goeldi's marmoset).